A 295-amino-acid polypeptide reads, in one-letter code: Phosphonoacetaldehyde hydrolase (295 aa).

Residue aspartate 36 is the Nucleophile of the active site. Residues aspartate 36 and alanine 38 each contribute to the Mg(2+) site. Lysine 78 serves as the catalytic Schiff-base intermediate with substrate. Aspartate 212 serves as a coordination point for Mg(2+).

It belongs to the HAD-like hydrolase superfamily. PhnX family. Homodimer. Requires Mg(2+) as cofactor.

The catalysed reaction is phosphonoacetaldehyde + H2O = acetaldehyde + phosphate + H(+). Involved in phosphonate degradation. The chain is Phosphonoacetaldehyde hydrolase from Psychromonas ingrahamii (strain DSM 17664 / CCUG 51855 / 37).